The primary structure comprises 340 residues: Holliday junction branch migration complex subunit RuvB (340 aa).

Positions 1-181 are large ATPase domain (RuvB-L); the sequence is MDRIVEIEKA…FGMQFRLNFY (181 aa). ATP-binding positions include Leu-20, Arg-21, Gly-62, Lys-65, Thr-66, Thr-67, 128–130, Arg-171, Tyr-181, and Arg-218; that span reads EDF. Position 66 (Thr-66) interacts with Mg(2+). The interval 182 to 252 is small ATPAse domain (RuvB-S); the sequence is TSDELAKIVQ…RAKSSLDALG (71 aa). The head domain (RuvB-H) stretch occupies residues 255–340; that stretch reads DLGFDEMDLK…TQKGLFDEDQ (86 aa). Residues Arg-309 and Arg-314 each coordinate DNA.

This sequence belongs to the RuvB family. In terms of assembly, homohexamer. Forms an RuvA(8)-RuvB(12)-Holliday junction (HJ) complex. HJ DNA is sandwiched between 2 RuvA tetramers; dsDNA enters through RuvA and exits via RuvB. An RuvB hexamer assembles on each DNA strand where it exits the tetramer. Each RuvB hexamer is contacted by two RuvA subunits (via domain III) on 2 adjacent RuvB subunits; this complex drives branch migration. In the full resolvosome a probable DNA-RuvA(4)-RuvB(12)-RuvC(2) complex forms which resolves the HJ.

Its subcellular location is the cytoplasm. It catalyses the reaction ATP + H2O = ADP + phosphate + H(+). The RuvA-RuvB-RuvC complex processes Holliday junction (HJ) DNA during genetic recombination and DNA repair, while the RuvA-RuvB complex plays an important role in the rescue of blocked DNA replication forks via replication fork reversal (RFR). RuvA specifically binds to HJ cruciform DNA, conferring on it an open structure. The RuvB hexamer acts as an ATP-dependent pump, pulling dsDNA into and through the RuvAB complex. RuvB forms 2 homohexamers on either side of HJ DNA bound by 1 or 2 RuvA tetramers; 4 subunits per hexamer contact DNA at a time. Coordinated motions by a converter formed by DNA-disengaged RuvB subunits stimulates ATP hydrolysis and nucleotide exchange. Immobilization of the converter enables RuvB to convert the ATP-contained energy into a lever motion, pulling 2 nucleotides of DNA out of the RuvA tetramer per ATP hydrolyzed, thus driving DNA branch migration. The RuvB motors rotate together with the DNA substrate, which together with the progressing nucleotide cycle form the mechanistic basis for DNA recombination by continuous HJ branch migration. Branch migration allows RuvC to scan DNA until it finds its consensus sequence, where it cleaves and resolves cruciform DNA. The protein is Holliday junction branch migration complex subunit RuvB of Campylobacter hominis (strain ATCC BAA-381 / DSM 21671 / CCUG 45161 / LMG 19568 / NCTC 13146 / CH001A).